The following is a 195-amino-acid chain: Imidazole glycerol phosphate synthase subunit HisH (195 aa).

The Glutamine amidotransferase type-1 domain occupies 1–193 (MIAIVDYGVG…RETTCNSTQQ (193 aa)). Cysteine 78 (nucleophile) is an active-site residue. Active-site residues include histidine 168 and glutamate 170.

Heterodimer of HisH and HisF.

It is found in the cytoplasm. The enzyme catalyses 5-[(5-phospho-1-deoxy-D-ribulos-1-ylimino)methylamino]-1-(5-phospho-beta-D-ribosyl)imidazole-4-carboxamide + L-glutamine = D-erythro-1-(imidazol-4-yl)glycerol 3-phosphate + 5-amino-1-(5-phospho-beta-D-ribosyl)imidazole-4-carboxamide + L-glutamate + H(+). It catalyses the reaction L-glutamine + H2O = L-glutamate + NH4(+). Its pathway is amino-acid biosynthesis; L-histidine biosynthesis; L-histidine from 5-phospho-alpha-D-ribose 1-diphosphate: step 5/9. Functionally, IGPS catalyzes the conversion of PRFAR and glutamine to IGP, AICAR and glutamate. The HisH subunit catalyzes the hydrolysis of glutamine to glutamate and ammonia as part of the synthesis of IGP and AICAR. The resulting ammonia molecule is channeled to the active site of HisF. The chain is Imidazole glycerol phosphate synthase subunit HisH from Exiguobacterium sibiricum (strain DSM 17290 / CCUG 55495 / CIP 109462 / JCM 13490 / 255-15).